A 136-amino-acid polypeptide reads, in one-letter code: Large ribosomal subunit protein uL16 (136 aa).

Belongs to the universal ribosomal protein uL16 family. As to quaternary structure, part of the 50S ribosomal subunit.

Functionally, binds 23S rRNA and is also seen to make contacts with the A and possibly P site tRNAs. The sequence is that of Large ribosomal subunit protein uL16 from Karelsulcia muelleri (strain GWSS) (Sulcia muelleri).